We begin with the raw amino-acid sequence, 354 residues long: Protein-arginine kinase (354 aa).

Residues 24 to 254 (IVLSSRIRLA…QQIIHQEKTA (231 aa)) form the Phosphagen kinase C-terminal domain. ATP-binding positions include 27 to 31 (SSRIR), histidine 92, arginine 125, 176 to 180 (RASVM), and 207 to 212 (RGIYGE). An RDXXRA motif of the pArg binding pocket involved in allosteric regulation motif is present at residues 337 to 342 (RDYRRA).

This sequence belongs to the ATP:guanido phosphotransferase family.

It catalyses the reaction L-arginyl-[protein] + ATP = N(omega)-phospho-L-arginyl-[protein] + ADP + H(+). With respect to regulation, appears to be allosterically activated by the binding of pArg-containing polypeptides to the pArg-binding pocket localized in the C-terminal domain of McsB. In terms of biological role, catalyzes the specific phosphorylation of arginine residues in a large number of proteins. Is part of the bacterial stress response system. Protein arginine phosphorylation has a physiologically important role and is involved in the regulation of many critical cellular processes, such as protein homeostasis, motility, competence, and stringent and stress responses, by regulating gene expression and protein activity. This is Protein-arginine kinase from Bacillus mycoides (strain KBAB4) (Bacillus weihenstephanensis).